A 419-amino-acid polypeptide reads, in one-letter code: MQKLIIHGGKPLKGIINISGAKNAVLPIMAASILTDKLHITNVPKLTDVSTMKELLKSHGAGIEIIEHENEFELVINAANINNLTADYEIVRKMRASIWVLGPLLSRYGKAKVSLPGGCAIGARQVDLHIAVLKAMGAEITIEDGYINASTAGRLKGTHFIFDKISVGATINAVLAAVLADGETLLFNCAREPEIVDLCNCLNKMGADISGIGTSEIRINGKDSLSEASYRVLPDRIEAGTYMFAAAITKGDLKLYGIDYHIIENIALKLIETGIKVMPIDNGVQVTYADKLNAVNLETNPYPGFATDLQAQFMSLMTISQGSSIITENIFENRFMHVPELCRMGADITVRGNQAIVQGVKGLKGAEVMASDLRASVSLILAGLSTDSETVLHRIYHLDRGFQNLEKKLNNCGADIKRV.

22–23 provides a ligand contact to phosphoenolpyruvate; sequence KN. Arg95 serves as a coordination point for UDP-N-acetyl-alpha-D-glucosamine. The Proton donor role is filled by Cys119. The residue at position 119 (Cys119) is a 2-(S-cysteinyl)pyruvic acid O-phosphothioketal. Asp308 and Ile330 together coordinate UDP-N-acetyl-alpha-D-glucosamine.

The protein belongs to the EPSP synthase family. MurA subfamily.

Its subcellular location is the cytoplasm. It carries out the reaction phosphoenolpyruvate + UDP-N-acetyl-alpha-D-glucosamine = UDP-N-acetyl-3-O-(1-carboxyvinyl)-alpha-D-glucosamine + phosphate. Its pathway is cell wall biogenesis; peptidoglycan biosynthesis. In terms of biological role, cell wall formation. Adds enolpyruvyl to UDP-N-acetylglucosamine. In Rickettsia bellii (strain OSU 85-389), this protein is UDP-N-acetylglucosamine 1-carboxyvinyltransferase.